The chain runs to 32 residues: Kappa-theraphotoxin-Gr2b (32 aa).

Intrachain disulfides connect cysteine 2–cysteine 16, cysteine 9–cysteine 21, and cysteine 15–cysteine 25.

The protein belongs to the neurotoxin 30 (phrixotoxin) family. As to expression, expressed by the venom gland.

The protein resides in the secreted. Functionally, binds the voltage-sensor domain of the potassium channel KvAP (from the archaeon Aeropyrum pernix) and affects channel gating. This Grammostola rosea (Chilean rose tarantula) protein is Kappa-theraphotoxin-Gr2b.